A 169-amino-acid chain; its full sequence is Oleosin Cor a 15 (169 aa).

Helical transmembrane passes span 38 to 58 and 70 to 90; these read IAVV…GLTF and PLFV…GLAV. Residues 70–81 carry the Proline-knot motif; sequence PLFVLCSPVLVP. 2 stretches are compositionally biased toward basic and acidic residues: residues 122 to 131 and 160 to 169; these read QMEHAKRRAQ and EGGRGEEKKT. The tract at residues 122–169 is disordered; it reads QMEHAKRRAQDTAGHLGQKARETGQTVTGKGQEAGKTLEGGRGEEKKT.

This sequence belongs to the oleosin family. As to expression, expressed in seeds (at protein level).

It is found in the lipid droplet. It localises to the membrane. In terms of biological role, may have a structural role to stabilize the lipid body during desiccation of the seed by preventing coalescence of the oil. Probably interacts with both lipid and phospholipid moieties of lipid bodies. May also provide recognition signals for specific lipase anchorage in lipolysis during seedling growth. In Corylus avellana (European hazel), this protein is Oleosin Cor a 15.